Here is a 485-residue protein sequence, read N- to C-terminus: NADH-quinone oxidoreductase subunit N (485 aa).

14 consecutive transmembrane segments (helical) span residues 8-28 (LIAL…MLSI), 35-55 (FLNA…LWFV), 71-91 (GFAM…CTFA), 105-125 (FYLL…ANHL), 127-147 (SLFL…GYAF), 159-179 (YTIL…LVYA), 203-223 (LLAG…LVPF), 235-255 (PAPV…GVVM), 271-291 (VVLA…ALSQ), 297-317 (LLGY…IALQ), 326-346 (VGVY…VVSL), 373-393 (AAVM…LGFI), 408-430 (WWLV…RVAV), and 455-475 (IVVL…QPLI).

This sequence belongs to the complex I subunit 2 family. In terms of assembly, NDH-1 is composed of 13 different subunits. Subunits NuoA, H, J, K, L, M, N constitute the membrane sector of the complex.

Its subcellular location is the cell inner membrane. It catalyses the reaction a quinone + NADH + 5 H(+)(in) = a quinol + NAD(+) + 4 H(+)(out). In terms of biological role, NDH-1 shuttles electrons from NADH, via FMN and iron-sulfur (Fe-S) centers, to quinones in the respiratory chain. The immediate electron acceptor for the enzyme in this species is believed to be ubiquinone. Couples the redox reaction to proton translocation (for every two electrons transferred, four hydrogen ions are translocated across the cytoplasmic membrane), and thus conserves the redox energy in a proton gradient. The chain is NADH-quinone oxidoreductase subunit N from Escherichia coli O6:K15:H31 (strain 536 / UPEC).